The sequence spans 2284 residues: RNA1 polyprotein (2284 aa).

Residues 567–1172 lie on the Cytoplasmic side of the membrane; it reads CTAEEIFRMH…LVENYSLLLT (606 aa). Residues 750 to 918 form the SF3 helicase domain; sequence VSKLEEVHQR…DNTHFTPRAY (169 aa). Residue 780 to 787 coordinates ATP; that stretch reads GASQSGKT. The chain crosses the membrane as a helical span at residues 1173-1193; that stretch reads LVAILVLIATAYSLISTLIGL. Over 1194 to 1216 the chain is Lumenal; sequence AGCSSFAGGMVALNHVSNASIPC. At Ser1217 the chain carries O-(5'-phospho-RNA)-serine. The Peptidase C3 domain occupies 1242–1457; it reads GPAQGQGDHE…SVIPSYSSSF (216 aa). Catalysis depends on for picornain 3C-like protease activity residues His1283, Glu1327, and Cys1419. Positions 1727–1851 constitute a RdRp catalytic domain; that stretch reads DVGYNCDYKG…TVSQSIMTSF (125 aa).

This sequence belongs to the nepoviruses RNA1 polyprotein family. Post-translationally, specific enzymatic cleavages by picornain 3C-like protease in vivo yield mature proteins. Picornain 3C-like protease is autocatalytically processed. VPg is uridylylated by the polymerase and is covalently linked to the 5'-end of genomic RNA. This uridylylated form acts as a nucleotide-peptide primer for the polymerase.

It is found in the host endoplasmic reticulum lumen. It localises to the host endoplasmic reticulum membrane. It carries out the reaction RNA(n) + a ribonucleoside 5'-triphosphate = RNA(n+1) + diphosphate. Picornain 3C-like protease is a thiol protease that cleaves the P1 and P2 polyproteins. The polypeptide is RNA1 polyprotein (Vitis vinifera (Grape)).